The chain runs to 51 residues: MRFQLRKCSKCFQYTLKEICPKCKEQTISAHPAKFSPDDKYMRYRLAERYN.

This sequence belongs to the NOP10 family.

In terms of biological role, involved in ribosome biogenesis; more specifically in 18S rRNA pseudouridylation and in cleavage of pre-rRNA. This chain is Ribosome biogenesis protein Nop10, found in Nitrosopumilus maritimus (strain SCM1).